The sequence spans 64 residues: Outer envelope membrane protein 7 (64 aa).

The Chloroplast intermembrane portion of the chain corresponds to 1 to 11 (MGKTSGAKQAT). A helical transmembrane segment spans residues 12 to 32 (VVVAAMALGWLAIEIAFKPFL). The AKR2A-binding sequence (ABS) required for chloroplast outer envelope membrane targeting signature appears at 29 to 35 (KPFLDKF). Residues 33-64 (DKFRSSIDKSDPTKDPDDFDTAATATTSKEGL) are Cytoplasmic-facing. The span at 39–48 (IDKSDPTKDP) shows a compositional bias: basic and acidic residues. A disordered region spans residues 39 to 64 (IDKSDPTKDPDDFDTAATATTSKEGL). Low complexity predominate over residues 53 to 64 (TAATATTSKEGL).

Interacts with AKR2A. In terms of tissue distribution, confined to green tissues.

The protein resides in the plastid. Its subcellular location is the chloroplast outer membrane. The polypeptide is Outer envelope membrane protein 7 (Arabidopsis thaliana (Mouse-ear cress)).